We begin with the raw amino-acid sequence, 365 residues long: 2-aminoethylphosphonate--pyruvate transaminase (365 aa).

The residue at position 194 (Lys194) is an N6-(pyridoxal phosphate)lysine.

This sequence belongs to the class-V pyridoxal-phosphate-dependent aminotransferase family. PhnW subfamily. Homodimer. The cofactor is pyridoxal 5'-phosphate.

It catalyses the reaction (2-aminoethyl)phosphonate + pyruvate = phosphonoacetaldehyde + L-alanine. Functionally, involved in phosphonate degradation. This Bacillus cereus (strain Q1) protein is 2-aminoethylphosphonate--pyruvate transaminase.